A 62-amino-acid polypeptide reads, in one-letter code: Metallothionein (62 aa).

Met-1 is subject to N-acetylmethionine. The segment at 1–30 is beta; sequence MDPQDCKCETGASCSCGTTCSCSNCKCTSC. A divalent metal cation-binding residues include Cys-6, Cys-8, Cys-14, Cys-16, Cys-20, Cys-22, Cys-25, Cys-27, Cys-30, Cys-34, Cys-35, Cys-37, Cys-38, Cys-42, Cys-45, Cys-49, Cys-51, Cys-58, Cys-60, and Cys-61. Residues 31-62 form an alpha region; the sequence is KKSCCSCCPAECSKCSQGCHCEKGSKKCSCCN.

Belongs to the metallothionein superfamily. Type 1 family.

Metallothioneins have a high content of cysteine residues that bind various heavy metals. This chain is Metallothionein (mt-a), found in Xenopus laevis (African clawed frog).